The following is a 448-amino-acid chain: Cysteine--tRNA ligase (448 aa).

Position 29 (Cys-29) interacts with Zn(2+). The 'HIGH' region motif lies at 31-41; the sequence is PTVYDTAHIGN. Positions 79-91 are enriched in basic and acidic residues; that stretch reads ATTGADRGADQAH. The disordered stretch occupies residues 79 to 106; it reads ATTGADRGADQAHRGPLPRRHGPLNAAP. The Zn(2+) site is built by Cys-206 and Glu-235. The short motif at 265 to 269 is the 'KMSKS' region element; it reads RMSKS. Lys-268 serves as a coordination point for ATP.

Belongs to the class-I aminoacyl-tRNA synthetase family. Monomer. It depends on Zn(2+) as a cofactor.

It is found in the cytoplasm. It catalyses the reaction tRNA(Cys) + L-cysteine + ATP = L-cysteinyl-tRNA(Cys) + AMP + diphosphate. In Azospirillum brasilense, this protein is Cysteine--tRNA ligase (cysS).